The sequence spans 274 residues: Rhamnulose-1-phosphate aldolase (274 aa).

Glu-117 is a catalytic residue. Residues His-141, His-143, and His-212 each coordinate Zn(2+).

The protein belongs to the aldolase class II family. RhaD subfamily. As to quaternary structure, homotetramer. Zn(2+) serves as cofactor.

Its subcellular location is the cytoplasm. It catalyses the reaction L-rhamnulose 1-phosphate = (S)-lactaldehyde + dihydroxyacetone phosphate. It participates in carbohydrate degradation; L-rhamnose degradation; glycerone phosphate from L-rhamnose: step 3/3. Functionally, catalyzes the reversible cleavage of L-rhamnulose-1-phosphate to dihydroxyacetone phosphate (DHAP) and L-lactaldehyde. This is Rhamnulose-1-phosphate aldolase from Yersinia pseudotuberculosis serotype I (strain IP32953).